The chain runs to 359 residues: 4-hydroxy-tetrahydrodipicolinate synthase, chloroplastic (359 aa).

The N-terminal 33 residues, 1-33, are a transit peptide targeting the chloroplast; it reads MSSSIIGRCHFVADSIEAAGTKRRTTRWRSPRA. Threonine 102 contacts pyruvate. Tyrosine 188 acts as the Proton donor/acceptor in catalysis. The active-site Schiff-base intermediate with substrate is the lysine 216. Isoleucine 255 serves as a coordination point for pyruvate.

This sequence belongs to the DapA family.

The protein resides in the plastid. It localises to the chloroplast. The catalysed reaction is L-aspartate 4-semialdehyde + pyruvate = (2S,4S)-4-hydroxy-2,3,4,5-tetrahydrodipicolinate + H2O + H(+). It participates in amino-acid biosynthesis; L-lysine biosynthesis via DAP pathway; (S)-tetrahydrodipicolinate from L-aspartate: step 3/4. In terms of biological role, catalyzes the condensation of (S)-aspartate-beta-semialdehyde [(S)-ASA] and pyruvate to 4-hydroxy-tetrahydrodipicolinate (HTPA). In Nicotiana tabacum (Common tobacco), this protein is 4-hydroxy-tetrahydrodipicolinate synthase, chloroplastic (DHPS1).